Consider the following 187-residue polypeptide: Ethylene-responsive transcription factor ERF015 (187 aa).

The segment at residues 26–83 (CYRGVRKRSWGKWVSEIRVPKTGRRIWLGSYDAPEKAARAYDAALFCIRGEKGVYNFP) is a DNA-binding region (AP2/ERF).

It belongs to the AP2/ERF transcription factor family. ERF subfamily.

It is found in the nucleus. In terms of biological role, probably acts as a transcriptional activator. Binds to the GCC-box pathogenesis-related promoter element. May be involved in the regulation of gene expression by stress factors and by components of stress signal transduction pathways. This is Ethylene-responsive transcription factor ERF015 (ERF015) from Arabidopsis thaliana (Mouse-ear cress).